The following is a 277-amino-acid chain: 3-methyl-2-oxobutanoate hydroxymethyltransferase (277 aa).

Residues aspartate 53 and aspartate 96 each contribute to the Mg(2+) site. 3-methyl-2-oxobutanoate-binding positions include 53–54, aspartate 96, and lysine 126; that span reads DS. Position 128 (glutamate 128) interacts with Mg(2+). The active-site Proton acceptor is the glutamate 195.

Belongs to the PanB family. As to quaternary structure, homodecamer; pentamer of dimers. Mg(2+) is required as a cofactor.

It localises to the cytoplasm. The catalysed reaction is 3-methyl-2-oxobutanoate + (6R)-5,10-methylene-5,6,7,8-tetrahydrofolate + H2O = 2-dehydropantoate + (6S)-5,6,7,8-tetrahydrofolate. It functions in the pathway cofactor biosynthesis; (R)-pantothenate biosynthesis; (R)-pantoate from 3-methyl-2-oxobutanoate: step 1/2. Its function is as follows. Catalyzes the reversible reaction in which hydroxymethyl group from 5,10-methylenetetrahydrofolate is transferred onto alpha-ketoisovalerate to form ketopantoate. This Chlorobium luteolum (strain DSM 273 / BCRC 81028 / 2530) (Pelodictyon luteolum) protein is 3-methyl-2-oxobutanoate hydroxymethyltransferase.